Consider the following 849-residue polypeptide: G-type lectin S-receptor-like serine/threonine-protein kinase B120 (849 aa).

Residues 1–25 form the signal peptide; that stretch reads MRFFRKTSLYLSLFLYFFLYESSMA. The 128-residue stretch at 26 to 153 folds into the Bulb-type lectin domain; it reads ANTIRRGESL…DTDRPIWESF (128 aa). Residues 26–438 lie on the Extracellular side of the membrane; that stretch reads ANTIRRGESL…SEVGENRKTK (413 aa). 6 N-linked (GlcNAc...) asparagine glycosylation sites follow: N110, N191, N210, N230, N273, and N282. Positions 295-332 constitute an EGF-like; atypical domain; it reads PDSECDQYNRCGKFGICDMKGSNGICSCIHGYEQVSVG. Disulfide bonds link C299-C311 and C305-C320. Residues N333, N349, and N388 are each glycosylated (N-linked (GlcNAc...) asparagine). Residues 346-427 enclose the PAN domain; sequence CERNISVGED…GGSSLHIRLA (82 aa). 2 disulfide bridges follow: C381/C402 and C385/C391. A helical membrane pass occupies residues 439–459; the sequence is IAVIVAVLVGVILIGIFALLL. At 460 to 849 the chain is on the cytoplasmic side; sequence WRFKRKKDVS…EITSTVVLGR (390 aa). A Protein kinase domain is found at 529–814; that stretch reads FCKENELGRG…TLAAPRQPTF (286 aa). ATP is bound by residues 535–543 and K557; that span reads LGRGGFGPV. Residue S563 is modified to Phosphoserine. The segment at 618-635 is caM-binding; the sequence is TKQALIDWKLRFSIIEGI. Residue D654 is the Proton acceptor of the active site. A phosphoserine mark is found at S658 and S671. Position 688 is a phosphothreonine (T688). Phosphoserine is present on residues S732 and S837. The residue at position 844 (T844) is a Phosphothreonine.

It belongs to the protein kinase superfamily. Ser/Thr protein kinase family.

It localises to the cell membrane. The enzyme catalyses L-seryl-[protein] + ATP = O-phospho-L-seryl-[protein] + ADP + H(+). The catalysed reaction is L-threonyl-[protein] + ATP = O-phospho-L-threonyl-[protein] + ADP + H(+). The polypeptide is G-type lectin S-receptor-like serine/threonine-protein kinase B120 (B120) (Arabidopsis thaliana (Mouse-ear cress)).